The following is a 182-amino-acid chain: ATP synthase subunit delta (182 aa).

Belongs to the ATPase delta chain family. As to quaternary structure, F-type ATPases have 2 components, F(1) - the catalytic core - and F(0) - the membrane proton channel. F(1) has five subunits: alpha(3), beta(3), gamma(1), delta(1), epsilon(1). F(0) has three main subunits: a(1), b(2) and c(10-14). The alpha and beta chains form an alternating ring which encloses part of the gamma chain. F(1) is attached to F(0) by a central stalk formed by the gamma and epsilon chains, while a peripheral stalk is formed by the delta and b chains.

It is found in the cell membrane. In terms of biological role, f(1)F(0) ATP synthase produces ATP from ADP in the presence of a proton or sodium gradient. F-type ATPases consist of two structural domains, F(1) containing the extramembraneous catalytic core and F(0) containing the membrane proton channel, linked together by a central stalk and a peripheral stalk. During catalysis, ATP synthesis in the catalytic domain of F(1) is coupled via a rotary mechanism of the central stalk subunits to proton translocation. Functionally, this protein is part of the stalk that links CF(0) to CF(1). It either transmits conformational changes from CF(0) to CF(1) or is implicated in proton conduction. The polypeptide is ATP synthase subunit delta (Syntrophomonas wolfei subsp. wolfei (strain DSM 2245B / Goettingen)).